Reading from the N-terminus, the 374-residue chain is Methionine import ATP-binding protein MetN 2 (374 aa).

Positions 32–271 constitute an ABC transporter domain; it reads VRFVGLGKTY…PQHEVSQTLL (240 aa). ATP is bound at residue 68–75; sequence GRSGAGKS.

It belongs to the ABC transporter superfamily. Methionine importer (TC 3.A.1.24) family. As to quaternary structure, the complex is composed of two ATP-binding proteins (MetN), two transmembrane proteins (MetI) and a solute-binding protein (MetQ).

It localises to the cell inner membrane. The catalysed reaction is L-methionine(out) + ATP + H2O = L-methionine(in) + ADP + phosphate + H(+). It carries out the reaction D-methionine(out) + ATP + H2O = D-methionine(in) + ADP + phosphate + H(+). In terms of biological role, part of the ABC transporter complex MetNIQ involved in methionine import. Responsible for energy coupling to the transport system. The sequence is that of Methionine import ATP-binding protein MetN 2 from Pseudomonas fluorescens (strain Pf0-1).